The primary structure comprises 236 residues: Ribosome assembly factor MRT4 (236 aa).

It belongs to the universal ribosomal protein uL10 family. In terms of assembly, associates with the pre-60S ribosomal particle.

It is found in the nucleus. The protein resides in the nucleolus. Its subcellular location is the cytoplasm. Component of the ribosome assembly machinery. Nuclear paralog of the ribosomal protein P0, it binds pre-60S subunits at an early stage of assembly in the nucleolus, and is replaced by P0 in cytoplasmic pre-60S subunits and mature 80S ribosomes. In Saccharomyces cerevisiae (strain ATCC 204508 / S288c) (Baker's yeast), this protein is Ribosome assembly factor MRT4.